The primary structure comprises 307 residues: Tropinone reductase homolog At2g29340 (307 aa).

13 to 37 (LVTGGASGIGYAIVEELAGFGARIH) is an NADP(+) binding site. S146 is a binding site for substrate. Y159 acts as the Proton acceptor in catalysis.

This sequence belongs to the short-chain dehydrogenases/reductases (SDR) family. SDR65C subfamily.

The chain is Tropinone reductase homolog At2g29340 from Arabidopsis thaliana (Mouse-ear cress).